We begin with the raw amino-acid sequence, 465 residues long: Cysteine--tRNA ligase (465 aa).

Residue Cys-27 coordinates Zn(2+). The short motif at Pro-29 to Asn-39 is the 'HIGH' region element. 3 residues coordinate Zn(2+): Cys-207, His-232, and Glu-236. Residues Lys-264–Ser-268 carry the 'KMSKS' region motif. Lys-267 is a binding site for ATP.

Belongs to the class-I aminoacyl-tRNA synthetase family. In terms of assembly, monomer. The cofactor is Zn(2+).

The protein resides in the cytoplasm. It carries out the reaction tRNA(Cys) + L-cysteine + ATP = L-cysteinyl-tRNA(Cys) + AMP + diphosphate. In Clostridium botulinum (strain Okra / Type B1), this protein is Cysteine--tRNA ligase.